A 484-amino-acid chain; its full sequence is Aspartyl/glutamyl-tRNA(Asn/Gln) amidotransferase subunit B (484 aa).

This sequence belongs to the GatB/GatE family. GatB subfamily. In terms of assembly, heterotrimer of A, B and C subunits.

The enzyme catalyses L-glutamyl-tRNA(Gln) + L-glutamine + ATP + H2O = L-glutaminyl-tRNA(Gln) + L-glutamate + ADP + phosphate + H(+). It carries out the reaction L-aspartyl-tRNA(Asn) + L-glutamine + ATP + H2O = L-asparaginyl-tRNA(Asn) + L-glutamate + ADP + phosphate + 2 H(+). Its function is as follows. Allows the formation of correctly charged Asn-tRNA(Asn) or Gln-tRNA(Gln) through the transamidation of misacylated Asp-tRNA(Asn) or Glu-tRNA(Gln) in organisms which lack either or both of asparaginyl-tRNA or glutaminyl-tRNA synthetases. The reaction takes place in the presence of glutamine and ATP through an activated phospho-Asp-tRNA(Asn) or phospho-Glu-tRNA(Gln). The protein is Aspartyl/glutamyl-tRNA(Asn/Gln) amidotransferase subunit B of Dechloromonas aromatica (strain RCB).